The sequence spans 453 residues: Probable glycine dehydrogenase (decarboxylating) subunit 1 (453 aa).

This sequence belongs to the GcvP family. N-terminal subunit subfamily. In terms of assembly, the glycine cleavage system is composed of four proteins: P, T, L and H. In this organism, the P 'protein' is a heterodimer of two subunits.

It catalyses the reaction N(6)-[(R)-lipoyl]-L-lysyl-[glycine-cleavage complex H protein] + glycine + H(+) = N(6)-[(R)-S(8)-aminomethyldihydrolipoyl]-L-lysyl-[glycine-cleavage complex H protein] + CO2. Functionally, the glycine cleavage system catalyzes the degradation of glycine. The P protein binds the alpha-amino group of glycine through its pyridoxal phosphate cofactor; CO(2) is released and the remaining methylamine moiety is then transferred to the lipoamide cofactor of the H protein. The chain is Probable glycine dehydrogenase (decarboxylating) subunit 1 from Methylococcus capsulatus (strain ATCC 33009 / NCIMB 11132 / Bath).